The primary structure comprises 285 residues: Extracellular metalloprotease SMAC_06893 (285 aa).

Positions 1–18 (MQIKSLLLAAAAAPAALG) are cleaved as a signal peptide. Histidine 197 serves as a coordination point for Zn(2+). Glutamate 198 is a catalytic residue. Histidine 201 is a binding site for Zn(2+). A disulfide bond links cysteine 233 and cysteine 260. Asparagine 282 carries N-linked (GlcNAc...) asparagine glycosylation.

This sequence belongs to the peptidase M43B family.

It is found in the secreted. In terms of biological role, secreted metalloproteinase that allows assimilation of proteinaceous substrates. This is Extracellular metalloprotease SMAC_06893 from Sordaria macrospora (strain ATCC MYA-333 / DSM 997 / K(L3346) / K-hell).